A 334-amino-acid chain; its full sequence is Protein-methionine-sulfoxide reductase catalytic subunit MsrP (334 aa).

The segment at residues 1-44 is a signal peptide (tat-type signal); it reads MKKNQFLKESDVTAESVFFMKRRQVLKALGISAAALSLPHAAHA. Residues asparagine 88, 91–92, cysteine 146, threonine 181, asparagine 233, arginine 238, and 249–251 each bind Mo-molybdopterin; these read YE and GIK.

It belongs to the MsrP family. As to quaternary structure, heterodimer of a catalytic subunit (MsrP) and a heme-binding subunit (MsrQ). It depends on Mo-molybdopterin as a cofactor. In terms of processing, predicted to be exported by the Tat system. The position of the signal peptide cleavage has not been experimentally proven.

Its subcellular location is the periplasm. The catalysed reaction is L-methionyl-[protein] + a quinone + H2O = L-methionyl-(S)-S-oxide-[protein] + a quinol. It catalyses the reaction L-methionyl-[protein] + a quinone + H2O = L-methionyl-(R)-S-oxide-[protein] + a quinol. In terms of biological role, part of the MsrPQ system that repairs oxidized periplasmic proteins containing methionine sulfoxide residues (Met-O), using respiratory chain electrons. Thus protects these proteins from oxidative-stress damage caused by reactive species of oxygen and chlorine generated by the host defense mechanisms. MsrPQ is essential for the maintenance of envelope integrity under bleach stress, rescuing a wide series of structurally unrelated periplasmic proteins from methionine oxidation, including the primary periplasmic chaperone SurA and the lipoprotein Pal. The catalytic subunit MsrP is non-stereospecific, being able to reduce both (R-) and (S-) diastereoisomers of methionine sulfoxide. The chain is Protein-methionine-sulfoxide reductase catalytic subunit MsrP from Escherichia coli O157:H7.